Here is a 328-residue protein sequence, read N- to C-terminus: Beta-ketoacyl-[acyl-carrier-protein] synthase III (328 aa).

Residues cysteine 113 and histidine 252 contribute to the active site. The segment at 253 to 257 is ACP-binding; that stretch reads QANLR. Asparagine 282 is a catalytic residue.

It belongs to the thiolase-like superfamily. FabH family. Homodimer.

It is found in the cytoplasm. It carries out the reaction malonyl-[ACP] + acetyl-CoA + H(+) = 3-oxobutanoyl-[ACP] + CO2 + CoA. The protein operates within lipid metabolism; fatty acid biosynthesis. Functionally, catalyzes the condensation reaction of fatty acid synthesis by the addition to an acyl acceptor of two carbons from malonyl-ACP. Catalyzes the first condensation reaction which initiates fatty acid synthesis and may therefore play a role in governing the total rate of fatty acid production. Possesses both acetoacetyl-ACP synthase and acetyl transacylase activities. Its substrate specificity determines the biosynthesis of branched-chain and/or straight-chain of fatty acids. This chain is Beta-ketoacyl-[acyl-carrier-protein] synthase III, found in Campylobacter fetus subsp. fetus (strain 82-40).